A 174-amino-acid polypeptide reads, in one-letter code: Adenine phosphoribosyltransferase (174 aa).

This sequence belongs to the purine/pyrimidine phosphoribosyltransferase family. Homodimer.

It is found in the cytoplasm. It carries out the reaction AMP + diphosphate = 5-phospho-alpha-D-ribose 1-diphosphate + adenine. It participates in purine metabolism; AMP biosynthesis via salvage pathway; AMP from adenine: step 1/1. Its function is as follows. Catalyzes a salvage reaction resulting in the formation of AMP, that is energically less costly than de novo synthesis. This Mycobacterium sp. (strain JLS) protein is Adenine phosphoribosyltransferase.